The following is a 342-amino-acid chain: NLP effector protein Pc107869 (342 aa).

The N-terminal stretch at 1–19 is a signal peptide; the sequence is MKTGFFLFAACAALVAVQA. A glycan (N-linked (GlcNAc...) asparagine) is linked at Asn24. A disordered region spans residues 41 to 125; it reads APRTKAPPTK…PTPDPGPWEA (85 aa). Residues 55 to 75 are compositionally biased toward low complexity; sequence QQSSLSGSQEQQQEQIETPAP. Pro residues predominate over residues 93-121; it reads TPAPTPAPTPAPTPAPTPAPTPAPTPDPG. The Hepta-peptide GHRHDWE motif motif lies at 226–232; it reads GHRHDWE.

It belongs to the Necrosis inducing protein (NPP1) family.

The protein resides in the secreted. Functionally, secreted effector that contributes strongly to virulence during infection by P.capsici. Induces cell death in the Solanaceae, including Nicotiana benthamiana. The sequence is that of NLP effector protein Pc107869 from Phytophthora capsici.